A 276-amino-acid polypeptide reads, in one-letter code: MSWWQVISLAVVQGLTEFLPVSSSGHLAVVSRVFFSDDAGASFTAVTQLGTEAAVLVYFARDIVRILRAWFDGLVVKSHRNADYRLGWYVIIGTIPICVLGLLFKDEIRSGVRNLWVVATALVVFSGVIALAEYLGRQSRHVEQLTWRDGLVVGVAQTLALVPGVSRSGSTISAGLFLGLDRELAARFGFLLAIPAVFASGLFSLPDAFHPVTEGMSATGPQLLVATLIAFVVGLAAVSWFLRFLLRHSMYWFVGYRVVVGVVVLILLATGTVAAT.

The next 5 helical transmembrane spans lie at 84–104 (YRLG…GLLF), 115–135 (LWVV…AEYL), 188–208 (FGFL…LPDA), 222–242 (QLLV…SWFL), and 250–270 (MYWF…LLAT).

It belongs to the UppP family.

It localises to the cell membrane. The catalysed reaction is di-trans,octa-cis-undecaprenyl diphosphate + H2O = di-trans,octa-cis-undecaprenyl phosphate + phosphate + H(+). Catalyzes the dephosphorylation of undecaprenyl diphosphate (UPP). Confers resistance to bacitracin. This chain is Undecaprenyl-diphosphatase, found in Mycobacterium ulcerans (strain Agy99).